We begin with the raw amino-acid sequence, 388 residues long: Staphopain A (388 aa).

Positions 1–25 (MKRNFPKLIALSLIFSLSITPIANA) are cleaved as a signal peptide. Residues 26-214 (ESNSNIKAKD…TSQFKSNNYT (189 aa)) constitute a propeptide that is removed on maturation. Active-site residues include Cys-238, His-334, and Asn-355.

Belongs to the peptidase C47 family. As to quaternary structure, in the cytoplasm, prematurely activated/folded ScpA forms a stable non-covalent complex with ScpB. In terms of processing, cleavage leads to the activation of ScpA probably by an auto-catalytic manner.

Its subcellular location is the secreted. It carries out the reaction Broad endopeptidase action on proteins including elastin, but rather limited hydrolysis of small-molecule substrates. Assays are conveniently made with hemoglobin, casein or Z-Phe-Arg-NHMec as substrate.. Its activity is regulated as follows. Prematurely activated/folded staphopain A is inhibited by staphostatin A (ScpB), which is probably required to protect staphylococcal cytoplasmic proteins from degradation by ScpA. Its function is as follows. Cysteine protease that plays an important role in the inhibition of host innate immune response. Cleaves host elastins found in connective tissues, pulmonary surfactant protein A in the lungs, and the chemokine receptor CXCR2 on leukocytes. Proteolytic cleavage of surfactant protein A impairs bacterial phagocytosis by neutrophils while CXCR2 degradation blocks neutrophil activation and chemotaxis. Additionally, promotes vascular leakage by activating the plasma kallikerin/kinin system, resulting in hypotension. In Staphylococcus aureus (strain MRSA252), this protein is Staphopain A (sspP).